Reading from the N-terminus, the 273-residue chain is ATP synthase subunit a (273 aa).

5 consecutive transmembrane segments (helical) span residues 42–62 (TLNIDSLFFSVVLGALFLFIF), 102–122 (VIAPLALTVFVWVFLMNMMDL), 148–168 (DVSITLSMALGVFILILFYSI), 213–233 (LFGNMYAGELIFILIAGLLPW), and 244–264 (AIFHILIITLQAFIFMVLTIV).

This sequence belongs to the ATPase A chain family. F-type ATPases have 2 components, CF(1) - the catalytic core - and CF(0) - the membrane proton channel. CF(1) has five subunits: alpha(3), beta(3), gamma(1), delta(1), epsilon(1). CF(0) has three main subunits: a(1), b(2) and c(9-12). The alpha and beta chains form an alternating ring which encloses part of the gamma chain. CF(1) is attached to CF(0) by a central stalk formed by the gamma and epsilon chains, while a peripheral stalk is formed by the delta and b chains.

Its subcellular location is the cell inner membrane. Functionally, key component of the proton channel; it plays a direct role in the translocation of protons across the membrane. This chain is ATP synthase subunit a, found in Serratia proteamaculans (strain 568).